A 174-amino-acid chain; its full sequence is MAAAAELKLLEKSLGLRPGNKYSAQGERQIPVLQTNNGPSLTGLATIATHLVKQASKEHLLGSTAEEKALVQQWLEYRITQVDGHSSKEDTHTLLKDLNSYLEDKVYLAGYNITLADILLYYGLHRFIVDLTVQEKEKYLNVSRWFCHIQHYPDIRQHLSSVVFIKNRLYANSH.

Ala2 is modified (N-acetylalanine). An N-terminal region spans residues 2 to 56; it reads AAAAELKLLEKSLGLRPGNKYSAQGERQIPVLQTNNGPSLTGLATIATHLVKQAS. Residues 50–173 enclose the GST C-terminal domain; the sequence is HLVKQASKEH…FIKNRLYANS (124 aa). A linker region spans residues 57-63; that stretch reads KEHLLGS. A C-terminal region spans residues 64–152; it reads TAEEKALVQQ…SRWFCHIQHY (89 aa). Lys138 carries the post-translational modification N6-acetyllysine. Residues 153–169 adopt a coiled-coil conformation; it reads PDIRQHLSSVVFIKNRL.

As to quaternary structure, part of a multisubunit complex that groups tRNA ligases for Arg (RARS1), Asp (DARS1), Gln (QARS1), Ile (IARS1), Leu (LARS1), Lys (KARS1), Met (MARS1) the bifunctional ligase for Glu and Pro (EPRS1) and the auxiliary subunits AIMP1/p43, AIMP2/p38 and EEF1E1/p18. Can interact simultaneously with MARS1 and EPRS1. Forms a linear complex that contains MARS1, EEF1E1, EPRS1 and AIMP2 that is at the core of the multisubunit complex. Interacts with ATM and ATR. The interaction with ATM, which takes place independently of TP53, is induced by DNA damage that may occur during genotoxic stress or cell growth. The interaction with ATR is enhanced by UV irradiation.

The protein localises to the cytoplasm. Its subcellular location is the nucleus. In terms of biological role, positive modulator of ATM response to DNA damage. The protein is Eukaryotic translation elongation factor 1 epsilon-1 (EEF1E1) of Cricetulus griseus (Chinese hamster).